The chain runs to 387 residues: 3-ketoacyl-CoA thiolase (387 aa).

Cys-91 functions as the Acyl-thioester intermediate in the catalytic mechanism. Catalysis depends on proton acceptor residues His-343 and Cys-373.

The protein belongs to the thiolase-like superfamily. Thiolase family. As to quaternary structure, heterotetramer of two alpha chains (FadB) and two beta chains (FadA).

It localises to the cytoplasm. The enzyme catalyses an acyl-CoA + acetyl-CoA = a 3-oxoacyl-CoA + CoA. It participates in lipid metabolism; fatty acid beta-oxidation. Functionally, catalyzes the final step of fatty acid oxidation in which acetyl-CoA is released and the CoA ester of a fatty acid two carbons shorter is formed. The protein is 3-ketoacyl-CoA thiolase of Vibrio vulnificus (strain CMCP6).